The primary structure comprises 104 residues: ATP-dependent Clp protease adapter protein ClpS (104 aa).

This sequence belongs to the ClpS family. In terms of assembly, binds to the N-terminal domain of the chaperone ClpA.

Functionally, involved in the modulation of the specificity of the ClpAP-mediated ATP-dependent protein degradation. In Paraburkholderia phymatum (strain DSM 17167 / CIP 108236 / LMG 21445 / STM815) (Burkholderia phymatum), this protein is ATP-dependent Clp protease adapter protein ClpS.